The chain runs to 165 residues: S-ribosylhomocysteine lyase (165 aa).

3 residues coordinate Fe cation: His54, His58, and Cys128.

Belongs to the LuxS family. Homodimer. It depends on Fe cation as a cofactor.

The catalysed reaction is S-(5-deoxy-D-ribos-5-yl)-L-homocysteine = (S)-4,5-dihydroxypentane-2,3-dione + L-homocysteine. Involved in the synthesis of autoinducer 2 (AI-2) which is secreted by bacteria and is used to communicate both the cell density and the metabolic potential of the environment. The regulation of gene expression in response to changes in cell density is called quorum sensing. Catalyzes the transformation of S-ribosylhomocysteine (RHC) to homocysteine (HC) and 4,5-dihydroxy-2,3-pentadione (DPD). The chain is S-ribosylhomocysteine lyase from Helicobacter hepaticus (strain ATCC 51449 / 3B1).